The sequence spans 328 residues: MKMPSAEVPTIDVSPLFGDDAQEKVRVGQEINKACRGSGFFYAANHGVDVQRLQDVVNEFHRTMSPQEKYDLAIHAYNKNNSHVRNGYYMAIEGKKAVESFCYLNPSFSEDHPEIKAGTPMHEVNSWPDEEKHPSFRPFCEEYYWTMHRLSKVLMRGFALALGKDERFFEPELKEADTLSSVSLIRYPYLEDYPPVKTGPDGEKLSFEDHFDVSMITVLYQTQVQNLQVETVDGWRDLPTSDTDFLVNAGTYLGHLTNDYFPSPLHRVKFVNAERLSLPFFFHAGQHTLIEPFFPDGAPEGKQGNEAVRYGDYLNHGLHSLIVKNGQT.

Isopenicillin N is bound by residues Arg85, Tyr89, Ser181, and Tyr187. 6 residues coordinate N-[(5S)-5-amino-5-carboxypentanoyl]-L-cysteinyl-D-valine: Arg85, Tyr89, Ser181, Tyr187, His210, and Asp212. A Fe2OG dioxygenase domain is found at 178-284; that stretch reads TLSSVSLIRY…RLSLPFFFHA (107 aa). Residues His210, Asp212, and His266 each coordinate Fe(2+). Arg275 serves as a coordination point for 2-oxoglutarate. Ser277 serves as a coordination point for isopenicillin N. N-[(5S)-5-amino-5-carboxypentanoyl]-L-cysteinyl-D-valine is bound at residue Ser277.

Belongs to the iron/ascorbate-dependent oxidoreductase family. It depends on Fe cation as a cofactor. Requires L-ascorbate as cofactor.

It catalyses the reaction N-[(5S)-5-amino-5-carboxypentanoyl]-L-cysteinyl-D-valine + O2 = isopenicillin N + 2 H2O. The protein operates within antibiotic biosynthesis; penicillin G biosynthesis; penicillin G from L-alpha-aminoadipate and L-cysteine and L-valine: step 2/3. Functionally, removes, in the presence of oxygen, 4 hydrogen atoms from delta-L-(alpha-aminoadipyl)-L-cysteinyl-D-valine (ACV) to form the azetidinone and thiazolidine rings of isopenicillin. The polypeptide is Isopenicillin N synthase (pcbC) (Amycolatopsis lactamdurans (Nocardia lactamdurans)).